Here is a 1304-residue protein sequence, read N- to C-terminus: TPR-containing protein DDB_G0280363 (1304 aa).

Disordered regions lie at residues 19 to 85, 153 to 195, 296 to 334, 447 to 477, 576 to 687, and 706 to 728; these read QQHH…HPQQ, NINN…NSSL, LPSTNSSIVSRQQQLQQQQQKLKLKSSPSPISPFFYTQQ, GFNWSPSLQPDQSTSTNHTQAMLQQQQQRQQ, QNQQ…VTTI, and LTTVNHSKPPPNESKRGELVESP. Composition is skewed to low complexity over residues 25-44, 52-85, and 153-194; these read QQNNTQVQQQQQQHTTQFNQ, HQQHQQQQHHQQQHHQQQQQQQQQQQQQQQHPQQ, and NINN…NNSS. The segment covering 296-306 has biased composition (polar residues); it reads LPSTNSSIVSR. Over residues 307–316 the composition is skewed to low complexity; that stretch reads QQQLQQQQQK. Residues 448–465 are compositionally biased toward polar residues; the sequence is FNWSPSLQPDQSTSTNHT. 2 stretches are compositionally biased toward low complexity: residues 466 to 477 and 576 to 597; these read QAMLQQQQQRQQ and QNQQQNQQQNQQQNQQHYPNQH. Over residues 598 to 625 the composition is skewed to basic residues; that stretch reads HGQHQHNQHNQHHNQHHNQSHPNHKNQH. The span at 626 to 687 shows a compositional bias: low complexity; the sequence is QKQNQTQQST…NNNTNNVTTI (62 aa). TPR repeat units lie at residues 769–802, 899–932, 978–1011, 1046–1079, 1084–1111, 1112–1150, and 1152–1184; these read WRVYLELADLANRQNNLKLARKFYRKVTSTQPYI, MKHVPWYGPIYQEAYKLEERCEEYERAINIVEKG, WKIYFEAAQIEERSKNLTLSRAAYVKSVELCPEN, SKLRSLVLLEYSRLEEYAGNINKSRRILKMAHVE, WKVFLESVLLEMRANNYEAAIKEAKESL, KIHSGAGRLWAALIQLNQLKGVKSQLNVFKKALQFVPKS, and EVWCEGARIALNNNELREARRFLEFAIQFTPQF.

This is TPR-containing protein DDB_G0280363 from Dictyostelium discoideum (Social amoeba).